The chain runs to 535 residues: F-box protein At1g56610 (535 aa).

The next 3 helical transmembrane spans lie at 3-23 (FALV…SSSI), 37-57 (VLLL…LCLF), and 82-102 (LAPH…SLLF). Positions 73–119 (TELCDLPKCLAPHILSWLPTKTAVTVSLLFMKGWWRSEMKNLSSLKF) constitute an F-box; degenerate domain.

In terms of assembly, part of a SCF (ASK-cullin-F-box) protein ligase complex. Interacts with ASK4.

It is found in the membrane. It functions in the pathway protein modification; protein ubiquitination. Functionally, component of SCF(ASK-cullin-F-box) E3 ubiquitin ligase complexes, which may mediate the ubiquitination and subsequent proteasomal degradation of target proteins. This is F-box protein At1g56610 from Arabidopsis thaliana (Mouse-ear cress).